Reading from the N-terminus, the 366-residue chain is Lipase member J (366 aa).

The active-site Nucleophile is the Ser-141. Active-site charge relay system residues include Asp-312 and His-341.

It belongs to the AB hydrolase superfamily. Lipase family.

The sequence is that of Lipase member J (LIPJ) from Homo sapiens (Human).